We begin with the raw amino-acid sequence, 332 residues long: Chitin synthase export chaperone (332 aa).

The next 7 membrane-spanning stretches (helical) occupy residues 51-71 (CANDFMHILAMVMTVIMIIHV), 86-106 (VFYIYLLLTIISLILDAGVTA), 121-141 (GLVSALCTCLLINGFVGFQLY), 149-169 (VWLLRLCSLAMFVVSGAVSLL), 182-202 (PIGIMIVTYIVNAIFLFVYVV), 218-238 (LGDISFGVFFFVIGQVILYVF), and 248-268 (HYIDGLFFATICNLLAVMMVY).

It belongs to the CHS7 family. As to quaternary structure, interacts with CHS3.

It localises to the endoplasmic reticulum membrane. Functionally, chaperone required for the export of the chitin synthase CHS3 from the endoplasmic reticulum. This is Chitin synthase export chaperone (CHS7) from Phaeosphaeria nodorum (strain SN15 / ATCC MYA-4574 / FGSC 10173) (Glume blotch fungus).